A 954-amino-acid chain; its full sequence is Endoplasmic reticulum aminopeptidase 2 (954 aa).

The Cytoplasmic portion of the chain corresponds to 1–7; the sequence is MANSCRK. Residues 8 to 28 form a helical; Signal-anchor for type II membrane protein membrane-spanning segment; the sequence is LIFNIYVVFYCSAVIMPQICI. Topologically, residues 29-954 are lumenal; the sequence is CSQFTSSPID…TLRKWLLTSI (926 aa). N-linked (GlcNAc...) asparagine glycosylation is found at Asn-79 and Asn-113. Substrate contacts are provided by residues Glu-194 and 328-332; that span reads GAMEN. His-364 provides a ligand contact to Zn(2+). Glu-365 serves as the catalytic Proton acceptor. Zn(2+) is bound by residues His-368 and Glu-387. An N-linked (GlcNAc...) asparagine glycan is attached at Asn-399. Cys-415 and Cys-454 are joined by a disulfide. N-linked (GlcNAc...) asparagine glycosylation occurs at Asn-644. Cysteines 753 and 760 form a disulfide.

This sequence belongs to the peptidase M1 family. As to quaternary structure, heterodimer with ERAP1. The cofactor is Zn(2+). Post-translationally, N-glycosylated.

It localises to the endoplasmic reticulum membrane. Aminopeptidase that plays a central role in peptide trimming, a step required for the generation of most HLA class I-binding peptides. Peptide trimming is essential to customize longer precursor peptides to fit them to the correct length required for presentation on MHC class I molecules. Preferentially hydrolyzes the basic residues Arg and Lys. The polypeptide is Endoplasmic reticulum aminopeptidase 2 (ERAP2) (Bos taurus (Bovine)).